Here is a 473-residue protein sequence, read N- to C-terminus: MDAQQGHTTTILMLPWVGYGHLLPFLELAKSLSRRKLFHIYFCSTSVSLDAIKPKLPPSISSDDSIQLVELRLPSSPELPPHLHTTNGLPSHLMPALHQAFVMAAQHFQVILQTLAPHLLIYDILQPWAPQVASSLNIPAINFSTTGASMLSRTLHPTHYPSSKFPISEFVLHNHWRAMYTTADGALTEEGHKIEETLANCLHTSCGVVLVNSFRELETKYIDYLSVLLNKKVVPVGPLVYEPNQEGEDEGYSSIKNWLDKKEPSSTVFVSFGTEYFPSKEEMEEIAYGLELSEVNFIWVLRFPQGDSTSTIEDALPKGFLERAGERAMVVKGWAPQAKILKHWSTGGLVSHCGWNSMMEGMMFGVPIIAVPMHLDQPFNAGLVEEAGVGVEAKRDSDGKIQREEVAKSIKEVVIEKTREDVRKKAREMDTKHGPTYFSRSKVSSFGRLYKINRPTTLTVGRFWSKQIKMKRE.

The Proton acceptor role is filled by H21. D123 serves as the catalytic Charge relay. UDP-alpha-D-glucose contacts are provided by T274, Q337, W355, N356, S357, E360, D376, and Q377.

The protein belongs to the UDP-glycosyltransferase family. As to expression, highly expressed in mature fruits.

It carries out the reaction mogroside IIE + UDP-alpha-D-glucose = mogroside IIIX + UDP + H(+). It catalyses the reaction mogroside III + UDP-alpha-D-glucose = siamenoside I + UDP + H(+). Its pathway is secondary metabolite biosynthesis; terpenoid biosynthesis. Its function is as follows. UDP-glycosyltransferase involved in the biosynthesis of cucurbitacin and mogroside tetracyclic triterpene natural products (e.g. siamenoside I and mogrosides IV, V and VI). Cucurbitacins have cytotoxic properties and exhibit deterrent taste as a defense barrier against herbivores. Mogrosides are nonsugar highly oxygenated compounds used as high-intensity zero-calorie sweeteners; they also possess pharmacological properties such as regulating immunity, lowering blood sugar and lipid levels, protecting the liver, and acting as antioxidants and antitumor agents. Catalyzes the branched glucosylations of mogroside II-E and mogroside III. This chain is Mogroside IIIx synthase, found in Siraitia grosvenorii (Monk's fruit).